A 385-amino-acid chain; its full sequence is Probable caffeine synthase MTL2 (385 aa).

S-adenosyl-L-homocysteine is bound by residues Tyr-18, Cys-62, Asn-67, Asp-101, Leu-102, Ser-140, Phe-141, and Cys-157. Residues Tyr-158, His-161, and Trp-162 each coordinate caffeine. Position 179 (Asn-179) interacts with Mg(2+). Thr-238 is a binding site for caffeine. Mg(2+)-binding residues include Asp-261, Phe-263, and Asn-264. Tyr-369 is a binding site for caffeine.

The protein belongs to the methyltransferase superfamily. Type-7 methyltransferase family. The cofactor is Mg(2+).

Its pathway is alkaloid biosynthesis. Functionally, may be involved in the biosynthesis of caffeine. In Coffea canephora (Robusta coffee), this protein is Probable caffeine synthase MTL2.